Here is a 368-residue protein sequence, read N- to C-terminus: WD repeat-containing protein RUP2 (368 aa).

7 WD repeats span residues 38-77 (SASDVIGAIEFDPTDNIVATAGISRKIRFYGLPSLLRNNA), 97-138 (CTPA…PVFE), 141-184 (EHGG…EESV), 192-232 (ICRS…DPAL), 236-276 (GHTK…RTYE), 279-318 (VNNRNFVGLSVWRNGALFGCGSENNRVFVYDRRWGKPVWV), and 330-368 (SDKRFVSSVCWRQSGVDQCTLVAGGSDGVLQVYVGKRKP).

Interacts with UVR8.

The protein localises to the nucleus. It localises to the cytoplasm. It is found in the cytosol. Functionally, functions in association with RUP1 as repressor of UV-B-induced photomorphogenesis mediated by UVR8 and HY5. Plays a crucial negative feedback regulatory role downstream of UVR8-COP1 to inhibit UVR8 function, balance UV-B-specific responses and ensure normal plant growth. Is involved in the regulation of photoperiodic flowering and vegetative development. May act as negative regulator of photoperiodic flowering by suppressing flowering through the action of CONSTANS (CO) and FLOWERING LOCUS T (FT). This Arabidopsis thaliana (Mouse-ear cress) protein is WD repeat-containing protein RUP2 (RUP2).